The sequence spans 675 residues: UvrABC system protein B (675 aa).

Residues 32–417 (EGLSDGLAYQ…EHAGQVVEQV (386 aa)) enclose the Helicase ATP-binding domain. 45–52 (GVTGSGKT) lines the ATP pocket. The short motif at 98 to 121 (YYDYYQPEAYVPSRDLFIEKDSAI) is the Beta-hairpin element. Residues 436–602 (QVDDLMSEIN…QIKKQVKDII (167 aa)) enclose the Helicase C-terminal domain. The region spanning 634–669 (IKEIAKLEKAMQQAARDLQFEEAAVLRDRISNIKEN) is the UVR domain.

This sequence belongs to the UvrB family. Forms a heterotetramer with UvrA during the search for lesions. Interacts with UvrC in an incision complex.

It is found in the cytoplasm. In terms of biological role, the UvrABC repair system catalyzes the recognition and processing of DNA lesions. A damage recognition complex composed of 2 UvrA and 2 UvrB subunits scans DNA for abnormalities. Upon binding of the UvrA(2)B(2) complex to a putative damaged site, the DNA wraps around one UvrB monomer. DNA wrap is dependent on ATP binding by UvrB and probably causes local melting of the DNA helix, facilitating insertion of UvrB beta-hairpin between the DNA strands. Then UvrB probes one DNA strand for the presence of a lesion. If a lesion is found the UvrA subunits dissociate and the UvrB-DNA preincision complex is formed. This complex is subsequently bound by UvrC and the second UvrB is released. If no lesion is found, the DNA wraps around the other UvrB subunit that will check the other stand for damage. The sequence is that of UvrABC system protein B from Neisseria gonorrhoeae (strain ATCC 700825 / FA 1090).